We begin with the raw amino-acid sequence, 45 residues long: Proteinase inhibitor IIA (45 aa).

3 disulfide bridges follow: C10-C24, C14-C35, and C20-C43.

Belongs to the protease inhibitor I20 (potato type II proteinase inhibitor) family.

The protein resides in the secreted. In terms of biological role, inhibits trypsin strongly and chymotrypsin temporarily. The polypeptide is Proteinase inhibitor IIA (Solanum tuberosum (Potato)).